A 370-amino-acid polypeptide reads, in one-letter code: Putative replication factor C small subunit L478 (370 aa).

41 to 48 is an ATP binding site; the sequence is GPSGSGKK. Positions 342 to 353 are enriched in basic and acidic residues; it reads RNKEPEKSEKTK. Residues 342–370 are disordered; that stretch reads RNKEPEKSEKTKSKTGKLSRTNSKKTIKN. Basic residues predominate over residues 354–370; sequence SKTGKLSRTNSKKTIKN.

The protein belongs to the activator 1 small subunits family. RfcS subfamily.

Part of the RFC clamp loader complex which loads the PCNA sliding clamp onto DNA. This is Putative replication factor C small subunit L478 from Acanthamoeba polyphaga (Amoeba).